A 140-amino-acid chain; its full sequence is DFMFGTSTASGGLAPSGVMNSLEPKGLAYYNNLLNELLKVLFTYFGDRAYAPNSPQRLSLSLSGVFHLLRGTADFYALNHYSSRDKYGLPKLLLTEDGYGDDGQLDDFEKNYLNATLQAMYLMKEQNVTSVHYTVNKCMN.

Residue Arg70 is the Nucleophile of the active site. Residues Asn114 and Asn127 are each glycosylated (N-linked (GlcNAc...) asparagine).

Belongs to the glycosyl hydrolase 1 family. As to quaternary structure, homodimer.

It catalyses the reaction a thioglucoside + H2O = a sugar + a thiol.. Its activity is regulated as follows. Inhibited by ascorbate. Functionally, degradation of glucosinolates (glucose residue linked by a thioglucoside bound to an amino acid derivative) to glucose, sulfate and any of the products: thiocyanates, isothiocyanates, nitriles, epithionitriles or oxazolidine-2-thiones. In Brevicoryne brassicae (Mealy cabbage aphid), this protein is Myrosinase 2.